The chain runs to 425 residues: Histidine--tRNA ligase (425 aa).

This sequence belongs to the class-II aminoacyl-tRNA synthetase family. In terms of assembly, homodimer.

The protein localises to the cytoplasm. It catalyses the reaction tRNA(His) + L-histidine + ATP = L-histidyl-tRNA(His) + AMP + diphosphate + H(+). The polypeptide is Histidine--tRNA ligase (Shewanella sp. (strain W3-18-1)).